The sequence spans 195 residues: Probable GTP-binding protein EngB (195 aa).

The 172-residue stretch at 24-195 (ELPEIALAGR…EAWDAILEKL (172 aa)) folds into the EngB-type G domain. GTP contacts are provided by residues 32–39 (GRSNVGKS), 59–63 (GKTQL), 77–80 (DVPG), 144–147 (TKAD), and 176–178 (FSS). The Mg(2+) site is built by Ser-39 and Thr-61.

It belongs to the TRAFAC class TrmE-Era-EngA-EngB-Septin-like GTPase superfamily. EngB GTPase family. Requires Mg(2+) as cofactor.

In terms of biological role, necessary for normal cell division and for the maintenance of normal septation. The chain is Probable GTP-binding protein EngB from Streptococcus pneumoniae (strain ATCC 700669 / Spain 23F-1).